Reading from the N-terminus, the 906-residue chain is Cadherin-2 (906 aa).

A signal peptide spans 1-25 (MCRIAGGPRTLLPLLAALLQASLEA). Positions 26–159 (SGELALCKTG…HSGALQRQKR (134 aa)) are excised as a propeptide. Phosphoserine is present on serine 96. Cadherin domains lie at 160–267 (DWVI…RPEF), 268–382 (LHQV…PPEF), 383–497 (TAMT…NPYF), 498–603 (APNP…DNAP), and 604–717 (QVLP…RIVG). Topologically, residues 160-724 (DWVIPPINLP…IVGAGLGTGT (565 aa)) are extracellular. Residue glutamate 170 participates in Ca(2+) binding. N-linked (GlcNAc...) asparagine glycosylation occurs at asparagine 190. Ca(2+) is bound by residues aspartate 226, glutamate 228, aspartate 259, methionine 260, asparagine 261, aspartate 262, and asparagine 263. A glycan (N-linked (GlcNAc...) asparagine) is linked at asparagine 273. Ca(2+) is bound by residues aspartate 293, aspartate 295, and asparagine 301. The N-linked (GlcNAc...) asparagine glycan is linked to asparagine 325. Aspartate 353 is a binding site for Ca(2+). Asparagine 402, asparagine 572, asparagine 622, asparagine 651, and asparagine 692 each carry an N-linked (GlcNAc...) asparagine glycan. The chain crosses the membrane as a helical span at residues 725-745 (IIAILLCIIILLILVLMFVVW). The Cytoplasmic segment spans residues 746-906 (MKRRDKERQA…LADMYGGGDD (161 aa)). The span at 863-880 (SGSTAGSLSSLNSSSSGG) shows a compositional bias: low complexity. The tract at residues 863–883 (SGSTAGSLSSLNSSSSGGDQD) is disordered.

In terms of assembly, homodimer (via extracellular region). Can also form heterodimers with other cadherins (via extracellular region). Dimerization occurs in trans, i.e. with a cadherin chain from another cell. Interacts with PCDH8; this complex may also include TAOK2. The interaction with PCDH8 may lead to internalization through TAOK2/p38 MAPK pathway. Identified in a complex containing FGFR4, NCAM1, CDH2, PLCG1, FRS2, SRC, SHC1, GAP43 and CTTN. May interact with OBSCN (via protein kinase domain 2). Interacts with FBXO45. Post-translationally, cleaved by MMP24. Ectodomain cleavage leads to the generation of a soluble 90 kDa N-terminal soluble fragment and a 45 kDa membrane-bound C-terminal fragment 1 (CTF1), which is further cleaved by gamma-secretase into a 35 kDa. Cleavage in neural stem cells by MMP24 affects CDH2-mediated anchorage of neural stem cells to ependymocytes in the adult subependymal zone, leading to modulate neural stem cell quiescence. May be phosphorylated by OBSCN. In terms of tissue distribution, in testis, expressed in Sertoli and germ cells.

The protein localises to the cell membrane. It is found in the sarcolemma. It localises to the cell junction. The protein resides in the cell surface. Its subcellular location is the desmosome. The protein localises to the adherens junction. In terms of biological role, calcium-dependent cell adhesion protein; preferentially mediates homotypic cell-cell adhesion by dimerization with a CDH2 chain from another cell. Cadherins may thus contribute to the sorting of heterogeneous cell types. Acts as a regulator of neural stem cells quiescence by mediating anchorage of neural stem cells to ependymocytes in the adult subependymal zone: upon cleavage by MMP24, CDH2-mediated anchorage is affected, leading to modulate neural stem cell quiescence. Plays a role in cell-to-cell junction formation between pancreatic beta cells and neural crest stem (NCS) cells, promoting the formation of processes by NCS cells. Required for proper neurite branching. Required for pre- and postsynaptic organization. CDH2 may be involved in neuronal recognition mechanism. In hippocampal neurons, may regulate dendritic spine density. This chain is Cadherin-2 (Cdh2), found in Rattus norvegicus (Rat).